Here is a 903-residue protein sequence, read N- to C-terminus: MDPRYGAQPQQHPHPHRTPSPGQPLQQGYQLDDNPFDDGRYGQYGPSQQHLAMPSGPDQHRLPTPSDHLNLNAAQSVDNLSGYGPPGDYAVNPEAHHDAYYNQPYEPRPQQQPYDQGYDQEYDQPYDDHRPMLQHQPSDAPSEPYQDQPQQGGGIKRWKTVKQVLLYRGNLVLDCPVPPVLLQQNPHGERDEFTHMRYSAATCDPNDFYDHDFTLRQRLFTKPRHTELFIVVTMYNEDDILFARTMTGVFKNIEYMCNRPNSKTWGKDAWKKIVVCVVSDGRSKINPRTKALLAGMGVYQEGIAKQQVNGKDVTAHIYEYTTQTHLQIKNDVVQLVHRRQPVQMLFCLKEKNAKKINSHRWFFTAFGRVLDPNICVLLDAGTRPGGSSIYHLWKAFDLEPMCGGACGEIKAMLGTGGKYLLNPLVAAQNFEYKMSNILDKPLESAFGFISVLPGAFSAYRYVALQNDKNGKGPLEKYFLGETLHGGSDAGLFESNMYLAEDRILCFELVTKRNCHWILQYVKSATGETDVPDTVTELVLQRRRWLNGSFFAAIYAIVHFLDFLRSDHTFLRKFAFFIEFIFNTINMIFAWFAIGNFFLVFKILTTSLGDDTLLGRTGEILGVVFTWLYGVFLITCFVLSLGNRPAGSGRLYTAMCWFWAIIMIYLLFAAIFIAVKAIIADVNDANGFNFADIFKNKVFYMLIISVMSTFGIWLIASLIMLDPWHMATSLVQYMLLTPTFTNVLNVYAFCNTHDVSWGTKGDDKVEKLPSVNTKDGTGKTDLPDEGDLNAQYQRELAVFAQKHVEVKTTPTPSQLQEKQMDYYRGVRTGVVLIWMVSNFGLAALVLSSAGLDRISPNKDKDHEAEQLSRSNIYMSIVLWSVAGLSAFKFIGAMWFLVVRMFRGV.

The interval 1 to 154 (MDPRYGAQPQ…YQDQPQQGGG (154 aa)) is disordered. The span at 67 to 79 (DHLNLNAAQSVDN) shows a compositional bias: polar residues. N79 carries an N-linked (GlcNAc...) asparagine glycan. Low complexity predominate over residues 100 to 117 (YYNQPYEPRPQQQPYDQG). Polar residues predominate over residues 135–150 (HQPSDAPSEPYQDQPQ). A run of 9 helical transmembrane segments spans residues 444–464 (SAFGFISVLPGAFSAYRYVAL), 543–563 (RWLNGSFFAAIYAIVHFLDFL), 573–593 (FAFFIEFIFNTINMIFAWFAI), 619–639 (ILGVVFTWLYGVFLITCFVLS), 654–674 (MCWFWAIIMIYLLFAAIFIAV), 700–720 (MLIISVMSTFGIWLIASLIML), 729–749 (LVQYMLLTPTFTNVLNVYAFC), 828–848 (GVVLIWMVSNFGLAALVLSSA), and 875–895 (IVLWSVAGLSAFKFIGAMWFL).

The protein belongs to the chitin synthase family. Class I subfamily.

It is found in the cell membrane. It catalyses the reaction [(1-&gt;4)-N-acetyl-beta-D-glucosaminyl](n) + UDP-N-acetyl-alpha-D-glucosamine = [(1-&gt;4)-N-acetyl-beta-D-glucosaminyl](n+1) + UDP + H(+). Functionally, polymerizes chitin, a structural polymer of the cell wall and septum, by transferring the sugar moiety of UDP-GlcNAc to the non-reducing end of the growing chitin polymer. Plays an important role in nuclear sorting or distribution. The sequence is that of Chitin synthase 1 from Fusarium oxysporum f. sp. lycopersici (strain 4287 / CBS 123668 / FGSC 9935 / NRRL 34936) (Fusarium vascular wilt of tomato).